The primary structure comprises 908 residues: Protein translocase subunit SecA (908 aa).

ATP-binding positions include glutamine 87, 105 to 109 (GEGKT), and aspartate 512. Residues 866–908 (GSDEDDAIAAHTPMIRDGDKVGRNDPCPCGSGRKYKQCHGKLS) form a disordered region. Basic and acidic residues predominate over residues 879–888 (MIRDGDKVGR). Zn(2+) contacts are provided by cysteine 892, cysteine 894, cysteine 903, and histidine 904. Over residues 898-908 (RKYKQCHGKLS) the composition is skewed to basic residues.

The protein belongs to the SecA family. As to quaternary structure, monomer and homodimer. Part of the essential Sec protein translocation apparatus which comprises SecA, SecYEG and auxiliary proteins SecDF-YajC and YidC. It depends on Zn(2+) as a cofactor.

It is found in the cell inner membrane. The protein localises to the cytoplasm. The catalysed reaction is ATP + H2O + cellular proteinSide 1 = ADP + phosphate + cellular proteinSide 2.. In terms of biological role, part of the Sec protein translocase complex. Interacts with the SecYEG preprotein conducting channel. Has a central role in coupling the hydrolysis of ATP to the transfer of proteins into and across the cell membrane, serving both as a receptor for the preprotein-SecB complex and as an ATP-driven molecular motor driving the stepwise translocation of polypeptide chains across the membrane. The polypeptide is Protein translocase subunit SecA (Shewanella oneidensis (strain ATCC 700550 / JCM 31522 / CIP 106686 / LMG 19005 / NCIMB 14063 / MR-1)).